Reading from the N-terminus, the 75-residue chain is Holin (75 aa).

2 helical membrane passes run 16-36 (FAQA…GVDW) and 39-59 (ALSI…ASGI).

As to quaternary structure, homomultimer.

Its subcellular location is the host cell inner membrane. In terms of biological role, accumulates harmlessly in the cytoplasmic membrane until it reaches a critical concentration that triggers the formation of micron-scale pores (holes) causing host cell membrane disruption and endolysin escape into the periplasmic space. Determines the precise timing of host cell lysis. Participates with the endolysin protein in the sequential events which lead to the programmed host cell lysis releasing the mature viral particles from the host cell. This is Holin from Lactococcus lactis subsp. cremoris (Streptococcus cremoris).